The primary structure comprises 235 residues: Vinculin (235 aa).

The protein belongs to the vinculin/alpha-catenin family. As to quaternary structure, exhibits self-association properties. Post-translationally, phosphorylated on serines, threonines and tyrosines. Acetylated by myristic acid and/or palmitic acid.

The protein localises to the cell membrane. The protein resides in the cell junction. It localises to the adherens junction. Its subcellular location is the focal adhesion. It is found in the cytoplasm. The protein localises to the cytoskeleton. The protein resides in the sarcolemma. It localises to the cell projection. Its subcellular location is the podosome. In terms of biological role, involved in cell adhesion. May be involved in the attachment of the actin-based microfilaments to the plasma membrane. The protein is Vinculin (vcl) of Xenopus laevis (African clawed frog).